A 902-amino-acid chain; its full sequence is Cytosolic 10-formyltetrahydrofolate dehydrogenase (902 aa).

Residues 1-310 (MKIAVIGQSL…PASQYYKTAD (310 aa)) form a hydrolase domain region. 88 to 90 (QFI) contributes to the (6R)-10-formyltetrahydrofolate binding site. Residue histidine 106 is the Proton donor of the active site. Aspartate 142 is a binding site for (6R)-10-formyltetrahydrofolate. Residues 318–395 (DEEKKFSEEI…EFIQMVVRRL (78 aa)) form the Carrier domain. Serine 354 carries the O-(pantetheine 4'-phosphoryl)serine modification. An aldehyde dehydrogenase domain region spans residues 417–902 (TVKIPHQLFI…LKTKAVTIEY (486 aa)). Residues 571 to 573 (IPW), 597 to 600 (KPAQ), 630 to 635 (GSLIGQ), 650 to 651 (GS), and 673 to 674 (EL) contribute to the NADP(+) site. Residue glutamate 673 is the Proton acceptor of the active site. The active-site Proton donor is cysteine 707. NADP(+) is bound by residues lysine 757 and 804–806 (ESF).

The protein in the N-terminal section; belongs to the GART family. In the C-terminal section; belongs to the aldehyde dehydrogenase family. ALDH1L subfamily. In terms of assembly, homotetramer. Phosphopantetheinylation at Ser-354 by AASDHPPT is required for the formyltetrahydrofolate dehydrogenase activity.

The protein localises to the cytoplasm. The protein resides in the cytosol. The catalysed reaction is (6R)-10-formyltetrahydrofolate + NADP(+) + H2O = (6S)-5,6,7,8-tetrahydrofolate + CO2 + NADPH + H(+). Functionally, cytosolic 10-formyltetrahydrofolate dehydrogenase that catalyzes the NADP(+)-dependent conversion of 10-formyltetrahydrofolate to tetrahydrofolate and carbon dioxide. May also have an NADP(+)-dependent aldehyde dehydrogenase activity towards formaldehyde, acetaldehyde, propionaldehyde, and benzaldehyde. Regulates reduced folate pools as well as glycine metabolism. This Xenopus tropicalis (Western clawed frog) protein is Cytosolic 10-formyltetrahydrofolate dehydrogenase (aldh1l1).